Reading from the N-terminus, the 1205-residue chain is Nitric oxide synthase 3 (1205 aa).

The disordered stretch occupies residues 1–73 (MGNLKSVGQE…PPEGPKFPRV (73 aa)). Glycine 2 is lipidated: N-myristoyl glycine. S-palmitoyl cysteine attachment occurs at residues cysteine 15 and cysteine 26. Residues 15 to 27 (CGLGLGLGLGLCG) are compositionally biased toward gly residues. Residues 33–47 (TPAPEPSRAPAPATP) show a composition bias toward pro residues. The Zn(2+) site is built by cysteine 96 and cysteine 101. Residues 100–488 (RCLGSLVLPR…PDPWKGSAAK (389 aa)) form an interaction with NOSIP region. Residue serine 104 coordinates (6R)-L-erythro-5,6,7,8-tetrahydrobiopterin. Position 116 is a phosphoserine; by CDK5 (serine 116). Cysteine 186 contributes to the heme b binding site. The L-arginine site is built by glutamine 249, tryptophan 358, tyrosine 359, glutamate 363, and asparagine 368. The (6R)-L-erythro-5,6,7,8-tetrahydrobiopterin site is built by alanine 448, tryptophan 449, and phenylalanine 462. Heme b is bound at residue tyrosine 477. The segment at 492–512 (IARKKTFKEVANAVKISASLM) is calmodulin-binding. Threonine 497 is subject to Phosphothreonine; by AMPK. The region spanning 522 to 705 (ASILYASETV…AFRGWAQAAF (184 aa)) is the Flavodoxin-like domain. Positions 528, 529, 530, 532, 574, and 575 each coordinate FMN. Serine 617, serine 635, and serine 640 each carry phosphoserine. Serine 656, cysteine 663, glutamate 689, and glutamine 693 together coordinate FMN. The 247-residue stretch at 758-1004 (RKMFQATVLS…IRAAPSFRLP (247 aa)) folds into the FAD-binding FR-type domain. Arginine 778 serves as a coordination point for NADP(+). Residue histidine 800 coordinates FAD. Residues 820–848 (EDPTPPTESVGVEQLEKGSPGGPPPSWVR) are disordered. The residue at position 838 (serine 838) is a Phosphoserine. FAD-binding residues include arginine 940, tyrosine 942, serine 943, threonine 958, alanine 960, tyrosine 964, valine 977, cysteine 978, and serine 979. 7 residues coordinate NADP(+): threonine 1018, arginine 1051, serine 1080, arginine 1081, lysine 1087, tyrosine 1089, and glutamine 1091. Threonine 1177 is subject to Phosphothreonine. Serine 1179 is modified (phosphoserine; by AMPK). Phosphoserine is present on serine 1181.

Belongs to the NOS family. In terms of assembly, homodimer. Interacts with NOSIP and NOSTRIN. Interacts with HSP90AB1. Forms a complex with ASL, ASS1 and SLC7A1; the complex regulates cell-autonomous L-arginine synthesis and citrulline recycling while channeling extracellular L-arginine to nitric oxide synthesis pathway. Heme b serves as cofactor. The cofactor is FAD. Requires FMN as cofactor. It depends on (6R)-L-erythro-5,6,7,8-tetrahydrobiopterin as a cofactor. Post-translationally, phosphorylation by AMPK at Ser-1179 in the presence of Ca(2+)-calmodulin (CaM) activates activity. In absence of Ca(2+)-calmodulin, AMPK also phosphorylates Thr-497, resulting in inhibition of activity. Phosphorylation of Ser-116 by CDK5 reduces activity.

The protein localises to the membrane. It is found in the caveola. It localises to the cytoplasm. Its subcellular location is the cytoskeleton. The protein resides in the golgi apparatus. The protein localises to the cell membrane. The catalysed reaction is 2 L-arginine + 3 NADPH + 4 O2 + H(+) = 2 L-citrulline + 2 nitric oxide + 3 NADP(+) + 4 H2O. Stimulated by calcium/calmodulin. Inhibited by NOSIP and NOSTRIN. Its function is as follows. Produces nitric oxide (NO) which is implicated in vascular smooth muscle relaxation through a cGMP-mediated signal transduction pathway. NO mediates vascular endothelial growth factor (VEGF)-induced angiogenesis in coronary vessels and promotes blood clotting through the activation of platelets. The protein is Nitric oxide synthase 3 (NOS3) of Sus scrofa (Pig).